The sequence spans 191 residues: MTKNKGLIIILSSPSGAGKSSLAKALLEIDHNLRLSISATTRKPRPNEQDGVNYYFKTKVEFEKLVKQNQFLEHAKIYDNYYGTPKKHVENLLNQGLDVLFDIDWQGARSIKQNAVNAVSIFILPPNLEVLEQRLRNRAADNEEAIQLRMASAQAEISHSNEYDHIITNDDFNDTIQQIHTIILQERKKRN.

Positions 6–184 constitute a Guanylate kinase-like domain; sequence GLIIILSSPS…TIQQIHTIIL (179 aa). 13 to 20 is a binding site for ATP; the sequence is SPSGAGKS.

It belongs to the guanylate kinase family.

The protein resides in the cytoplasm. It carries out the reaction GMP + ATP = GDP + ADP. Essential for recycling GMP and indirectly, cGMP. This is Guanylate kinase from Rickettsia bellii (strain RML369-C).